The chain runs to 818 residues: Glycogen phosphorylase (818 aa).

The residue at position 667 (Lys667) is an N6-(pyridoxal phosphate)lysine.

It belongs to the glycogen phosphorylase family. Pyridoxal 5'-phosphate serves as cofactor.

The catalysed reaction is [(1-&gt;4)-alpha-D-glucosyl](n) + phosphate = [(1-&gt;4)-alpha-D-glucosyl](n-1) + alpha-D-glucose 1-phosphate. In terms of biological role, phosphorylase is an important allosteric enzyme in carbohydrate metabolism. Enzymes from different sources differ in their regulatory mechanisms and in their natural substrates. However, all known phosphorylases share catalytic and structural properties. This is Glycogen phosphorylase (glgP) from Pasteurella multocida (strain Pm70).